A 489-amino-acid chain; its full sequence is Lysine--tRNA ligase (489 aa).

Glu-399 and Glu-406 together coordinate Mg(2+).

The protein belongs to the class-II aminoacyl-tRNA synthetase family. As to quaternary structure, homodimer. It depends on Mg(2+) as a cofactor.

Its subcellular location is the cytoplasm. The catalysed reaction is tRNA(Lys) + L-lysine + ATP = L-lysyl-tRNA(Lys) + AMP + diphosphate. This chain is Lysine--tRNA ligase, found in Roseiflexus sp. (strain RS-1).